Here is a 687-residue protein sequence, read N- to C-terminus: Pre-mRNA-splicing factor CLF1 (687 aa).

HAT repeat units follow at residues 45-77, 79-111, 113-145, 147-178, 180-211, 213-247, 251-283, 300-332, 337-369, 383-416, 451-483, 525-557, and 629-661; these read EYQR…FEIE, HDMR…AELK, KCIN…VEES, NNVE…FEIR, KNWN…FENR, GNTE…AKLV, AHWE…LKAG, TISY…LISE, QIMQ…LWMR, LEEE…FLIR, KEFD…LEEN, QEFE…YQTS, and LDQE…YIFP.

Belongs to the crooked-neck family. Belongs to the NTC complex (or PRP19-associated complex), composed of at least CEF1, CLF1, ISY1, NTC20, SNT309, SYF1, SYF2, and PRP19. The NTC complex associates with the spliceosome after the release of the U1 and U4 snRNAs and forms the CWC spliceosome subcomplex (or CEF1-associated complex) reminiscent of a late-stage spliceosome composed also of the U2, U5 and U6 snRNAs and at least BUD13, BUD31, BRR2, CDC40, CUS1, CWC2, CWC15, CWC21, CWC22, CWC23, CWC24, CWC25, CWC27, ECM2, HSH155, IST3, LEA1, MSL1, PRP8, PRP9, PRP11, PRP21, PRP22, PRP45, PRP46, SLU7, SMB1, SMD1, SMD2, SMD3, SMX2, SMX3, SNU114, SPP2, RSE1 and YJU2. Interacts with CEF1, ISY1, MUD2, NTC20, PRP22, PRP40, PRP46, SYF1, SYF2, and the ORC2 subunit of the origin recognition complex.

The protein localises to the nucleus. In terms of biological role, involved in pre-mRNA splicing and cell cycle progression. Required for the spliceosome assembly by promoting the functional integration of the U4/U6.U5 tri-snRNP particle into the U1-, U2-dependent pre-spliceosome. Also recruits PRP19 to the spliceosome, as a component of the NTC complex (or PRP19-associated complex). The association of the NTC complex to the spliceosome mediates conformational rearrangement or stabilizes the structure of the spliceosome after U4 snRNA dissociation, which leads to spliceosome maturation. Required for initiation of the DNA replication by binding the RNA replication origins, probably through its interaction with the origin recognition complex (ORC). This is Pre-mRNA-splicing factor CLF1 (CLF1) from Saccharomyces cerevisiae (strain ATCC 204508 / S288c) (Baker's yeast).